The following is a 106-amino-acid chain: Large ribosomal subunit protein eL36 (106 aa).

A compositionally biased stretch (basic and acidic residues) spans 75–93 (VRQEKVGHSQESKEEERGD). Positions 75–106 (VRQEKVGHSQESKEEERGDVQCSPPDEGWWWY) are disordered.

The protein belongs to the eukaryotic ribosomal protein eL36 family.

This is Large ribosomal subunit protein eL36 (RPL36) from Daucus carota (Wild carrot).